The primary structure comprises 167 residues: Phosphopantetheine adenylyltransferase (167 aa).

Ser-9 contacts substrate. Residues 9–10 (SF) and His-17 contribute to the ATP site. Substrate contacts are provided by Lys-41, Leu-73, and Lys-87. Residues 88-90 (GLR), Glu-98, and 123-129 (YSYLSSS) each bind ATP.

It belongs to the bacterial CoaD family. In terms of assembly, homohexamer. The cofactor is Mg(2+).

Its subcellular location is the cytoplasm. It carries out the reaction (R)-4'-phosphopantetheine + ATP + H(+) = 3'-dephospho-CoA + diphosphate. The protein operates within cofactor biosynthesis; coenzyme A biosynthesis; CoA from (R)-pantothenate: step 4/5. Reversibly transfers an adenylyl group from ATP to 4'-phosphopantetheine, yielding dephospho-CoA (dPCoA) and pyrophosphate. The chain is Phosphopantetheine adenylyltransferase from Caldicellulosiruptor bescii (strain ATCC BAA-1888 / DSM 6725 / KCTC 15123 / Z-1320) (Anaerocellum thermophilum).